We begin with the raw amino-acid sequence, 159 residues long: MEQSHQNLQSQFFIEHILQILPHRYPMLLVDRIIELQANKKIAAYKNITFNEDVFNGHFPNKPIFPGVLIVEGMAQSGGFLAFTSLWGFDPEIAKTKIVYFMTIDKVKFRIPVTPGDRLEYHLEVLKHKGMIWQVGGTAQVDGKVVAEAELKAMIAERE.

His58 is an active-site residue.

This sequence belongs to the thioester dehydratase family. FabZ subfamily.

It is found in the cytoplasm. It catalyses the reaction a (3R)-hydroxyacyl-[ACP] = a (2E)-enoyl-[ACP] + H2O. Its function is as follows. Involved in unsaturated fatty acids biosynthesis. Catalyzes the dehydration of short chain beta-hydroxyacyl-ACPs and long chain saturated and unsaturated beta-hydroxyacyl-ACPs. The sequence is that of 3-hydroxyacyl-[acyl-carrier-protein] dehydratase FabZ from Helicobacter pylori (strain HPAG1).